A 396-amino-acid polypeptide reads, in one-letter code: Pinosylvin synthase 2 (396 aa).

A substrate-binding site is contributed by 60-63 (KFKR). Cys-170 is a catalytic residue. Residues Leu-273 and 311-313 (GGR) each bind substrate.

It belongs to the thiolase-like superfamily. Chalcone/stilbene synthases family. As to quaternary structure, homodimer.

The protein resides in the cytoplasm. It carries out the reaction (E)-cinnamoyl-CoA + 3 malonyl-CoA + 3 H(+) = (E)-pinosylvin + 4 CO2 + 4 CoA. It catalyses the reaction 3-phenylpropanoyl-CoA + 3 malonyl-CoA + 3 H(+) = dihydropinosylvin + 4 CO2 + 4 CoA. It participates in phytoalexin biosynthesis; pinosylvin biosynthesis. Functionally, catalyzes the production of pinosylvin from cinnamoyl-CoA and malonyl-CoA, and dihydropinosylvin from dihydrocinnamoyl-CoA. In Pinus strobus (Eastern white pine), this protein is Pinosylvin synthase 2.